A 481-amino-acid polypeptide reads, in one-letter code: Tripartite motif-containing protein 10 (481 aa).

Residues 16-61 form an RING-type zinc finger; it reads CPICQGTLREPVTIDCGHNFCRACLTRYCEIPGPDLEESPTCPLCK. Residues 94–135 form a B box-type zinc finger; that stretch reads GEEDVCQEHGEKIYFFCEDDEMQLCVVCREAGEHATHTMRFL. Zn(2+) contacts are provided by Cys99, His102, Cys121, and His127. The stretch at 142–177 forms a coiled coil; sequence YREQIHKCLKRLRKEREETQEIQSRENKRMQVLLTQ. Residues 292-481 form the B30.2/SPRY domain; the sequence is REMKMFLEKL…GRGSSFFLSS (190 aa).

This sequence belongs to the TRIM/RBCC family. As to quaternary structure, interacts with IFNAR1; this interaction prevents association of IFNAR1 with TYK2.

It is found in the cytoplasm. Functionally, E3 ligase that plays an essential role in the differentiation and survival of terminal erythroid cells. May directly bind to PTEN and promote its ubiquitination, resulting in its proteasomal degradation and activation of hypertrophic signaling. In addition, plays a role in immune response regulation by repressing the phosphorylation of STAT1 and STAT2 in the interferon/JAK/STAT signaling pathway independent of its E3 ligase activity. Mechanistically, interacts with the intracellular domain of IFNAR1 and thereby inhibits the association of TYK2 and IFNAR1. This is Tripartite motif-containing protein 10 (TRIM10) from Pan troglodytes (Chimpanzee).